The sequence spans 294 residues: Ribosomal protein L11 methyltransferase (294 aa).

Residues threonine 144, glycine 165, aspartate 187, and asparagine 229 each coordinate S-adenosyl-L-methionine.

It belongs to the methyltransferase superfamily. PrmA family.

The protein localises to the cytoplasm. The enzyme catalyses L-lysyl-[protein] + 3 S-adenosyl-L-methionine = N(6),N(6),N(6)-trimethyl-L-lysyl-[protein] + 3 S-adenosyl-L-homocysteine + 3 H(+). Its function is as follows. Methylates ribosomal protein L11. This chain is Ribosomal protein L11 methyltransferase, found in Pseudomonas paraeruginosa (strain DSM 24068 / PA7) (Pseudomonas aeruginosa (strain PA7)).